The sequence spans 478 residues: Pyrrolysine--tRNA ligase (478 aa).

Positions 106-188 (VMPKSVARTP…TSAMPASTSA (83 aa)) are disordered. Residues 122–132 (APVQTLPSESQ) are compositionally biased toward polar residues. Positions 133–188 (PAPTTPISASTTAPASTSTTAPAPASTTAPAPASTTAPASASTTISTSAMPASTSA) are enriched in low complexity.

It belongs to the class-II aminoacyl-tRNA synthetase family.

It is found in the cytoplasm. It catalyses the reaction tRNA(Pyl) + L-pyrrolysine + ATP = L-pyrrolysyl-tRNA(Pyl) + AMP + diphosphate. Catalyzes the attachment of pyrrolysine to tRNA(Pyl). Pyrrolysine is a lysine derivative encoded by the termination codon UAG. The sequence is that of Pyrrolysine--tRNA ligase from Methanosarcina thermophila.